The primary structure comprises 274 residues: MTLQEEIIRQLGVKASIDPKEEIRKTVDFLKTYLRKHSFLKTYVLGISGGQDSTLAGKLAQMAIAELREETGDQAYQFIAVRLPYGVQADEADAQKALAFIMPDQTLTINIKAAVDGQVAALQEAGIEISDFNKGNIKARQRMISQYAIAGQMAGAVIGTDHAAENITGFFTKFGDGGADILPLFRLNKRQGKALLKVLGADAALYEKVPTADLEDQKPGLADEVALGVTYQDIDDYLEGKLISKVAQATIEKWWHKGQHKRHLPITIFDDFWK.

46-53 (GISGGQDS) contributes to the ATP binding site. Asp52 contacts Mg(2+). Arg140 provides a ligand contact to deamido-NAD(+). Thr160 serves as a coordination point for ATP. Glu165 lines the Mg(2+) pocket. Residues Lys173 and Asp180 each coordinate deamido-NAD(+). Lys189 and Thr211 together coordinate ATP. A deamido-NAD(+)-binding site is contributed by 260–261 (HK).

The protein belongs to the NAD synthetase family. Homodimer.

It carries out the reaction deamido-NAD(+) + NH4(+) + ATP = AMP + diphosphate + NAD(+) + H(+). Its pathway is cofactor biosynthesis; NAD(+) biosynthesis; NAD(+) from deamido-NAD(+) (ammonia route): step 1/1. Functionally, catalyzes the ATP-dependent amidation of deamido-NAD to form NAD. Uses ammonia as a nitrogen source. The chain is NH(3)-dependent NAD(+) synthetase from Streptococcus pyogenes serotype M18 (strain MGAS8232).